The chain runs to 158 residues: Large ribosomal subunit protein uL15 (158 aa).

The protein belongs to the universal ribosomal protein uL15 family. As to quaternary structure, part of the 50S ribosomal subunit.

Its function is as follows. Binds to the 23S rRNA. This Aeropyrum pernix (strain ATCC 700893 / DSM 11879 / JCM 9820 / NBRC 100138 / K1) protein is Large ribosomal subunit protein uL15.